A 545-amino-acid chain; its full sequence is Adenine deaminase (545 aa).

This sequence belongs to the metallo-dependent hydrolases superfamily. Adenine deaminase family. Mn(2+) is required as a cofactor.

The enzyme catalyses adenine + H2O + H(+) = hypoxanthine + NH4(+). This is Adenine deaminase from Parabacteroides distasonis (strain ATCC 8503 / DSM 20701 / CIP 104284 / JCM 5825 / NCTC 11152).